The primary structure comprises 85 residues: MAHKKAGGSTRNGRDSEAKRLGVKRFGGETVLAGSIIVRQRGTKFHAGTNVGCGRDHTLFAKADGKVKFEVKGPNNRKYISIVAE.

The disordered stretch occupies residues Met-1–Arg-20.

This sequence belongs to the bacterial ribosomal protein bL27 family.

The polypeptide is Large ribosomal subunit protein bL27 (Citrobacter koseri (strain ATCC BAA-895 / CDC 4225-83 / SGSC4696)).